Consider the following 714-residue polypeptide: Putative glutamine--fructose-6-phosphate aminotransferase [isomerizing] (714 aa).

Residue C2 is the Nucleophile; for GATase activity of the active site. Residues 2-321 (CGIFGYCNFL…DNDIAHIYDG (320 aa)) form the Glutamine amidotransferase type-2 domain. A compositionally biased stretch (polar residues) spans 266–280 (STTSTFNHGSSTETP). A disordered region spans residues 266 to 285 (STTSTFNHGSSTETPAENGL). SIS domains follow at residues 387–526 (WLTE…DLVS) and 559–704 (CDKK…VDLP).

The catalysed reaction is D-fructose 6-phosphate + L-glutamine = D-glucosamine 6-phosphate + L-glutamate. It functions in the pathway nucleotide-sugar biosynthesis; UDP-N-acetyl-alpha-D-glucosamine biosynthesis; alpha-D-glucosamine 6-phosphate from D-fructose 6-phosphate: step 1/1. In terms of biological role, involved in amino sugar synthesis (formation of chitin, supplies the amino sugars of asparagine-linked oligosaccharides of glycoproteins). This Saccharomyces cerevisiae (strain YJM789) (Baker's yeast) protein is Putative glutamine--fructose-6-phosphate aminotransferase [isomerizing].